The chain runs to 429 residues: L-dopachrome tautomerase yellow-f (429 aa).

The signal sequence occupies residues 1-23; it reads MLSLDVLLLCAISGFQLLISADG. Asn-133 and Asn-372 each carry an N-linked (GlcNAc...) asparagine glycan.

The protein belongs to the major royal jelly protein family.

It localises to the secreted. It carries out the reaction L-dopachrome = 5,6-dihydroxyindole-2-carboxylate. It functions in the pathway pigment biosynthesis; melanin biosynthesis. Tautomerization of L-dopachrome with decarboxylation to give 5,6-dihydroxyindole (DHI). Also catalyzes the tautomerization of the methyl ester of L-dopachrome and dopamine chrome. May play a role in melanization reactions during late pupal and adult stages. May play a role in melanization reactions during larval and early pupal stages. In Drosophila melanogaster (Fruit fly), this protein is L-dopachrome tautomerase yellow-f.